A 170-amino-acid chain; its full sequence is MKTQRDSPSLGRWSLVLLLLGLVMPLAIVAQVLSYQEAVLRAIDGINQRSSDANLYRLLDLDPRPTMDGDPDTPKPVSFTVKETVCPRTTQQSPEDCDFKKDGLVKRCVGTVILNQARDSFDISCDKDNRRFALPGNFFRKAREKIGKEFKRIVQRIKDFLQHLVPRTEA.

A signal peptide spans 1–30 (MKTQRDSPSLGRWSLVLLLLGLVMPLAIVA). The propeptide at 31 to 131 (QVLSYQEAVL…DISCDKDNRR (101 aa)) is cathelin-like domain (CLD). Cystine bridges form between Cys86-Cys97 and Cys108-Cys125. An active core region spans residues 150 to 162 (FKRIVQRIKDFLQ).

This sequence belongs to the cathelicidin family. In terms of assembly, monomer, homodimer or homotrimer (in vitro). Oligomerizes as tetra- or hexamer in solution (in vitro). Post-translationally, proteolytically cleaved by proteinase PRTN3 into antibacterial peptide LL-37. Proteolytically cleaved by cathepsin CTSG and neutrophil elastase ELANE. Resistant to proteolytic degradation in solution, and when bound to both zwitterionic (mimicking mammalian membranes) and negatively charged membranes (mimicking bacterial membranes). In terms of processing, after secretion onto the skin surface, the CAMP gene product is processed by a serine protease-dependent mechanism into multiple novel antimicrobial peptides distinct from and shorter than cathelicidin LL-37. These peptides show enhanced antimicrobial action, acquiring the ability to kill skin pathogens such as S.aureus, E.coli and C.albicans. These peptides have lost the ability to stimulate CXCL8/IL8 release from keratinocytes. The peptides act synergistically, killing bacteria at lower concentrations when present together, and maintain activity at increased salt condition.

It is found in the secreted. The protein resides in the vesicle. Functionally, antimicrobial protein that is an integral component of the innate immune system. Binds to bacterial lipopolysaccharides (LPS). Acts via neutrophil N-formyl peptide receptors to enhance the release of CXCL2. Postsecretory processing generates multiple cathelicidin antimicrobial peptides with various lengths which act as a topical antimicrobial defense in sweat on skin. The unprocessed precursor form, cathelicidin antimicrobial peptide, inhibits the growth of Gram-negative E.coli and E.aerogenes with efficiencies comparable to that of the mature peptide LL-37 (in vitro). Its function is as follows. Antimicrobial peptide that is an integral component of the innate immune system. Binds to bacterial lipopolysaccharides (LPS). Causes membrane permeabilization by forming transmembrane pores (in vitro). Causes lysis of E.coli. Exhibits antimicrobial activity against Gram-negative bacteria such as P.aeruginosa, S.typhimurium, E.aerogenes, E.coli and P.syringae, Gram-positive bacteria such as L.monocytogenes, S.epidermidis, S.pyogenes and S.aureus, as well as vancomycin-resistant enterococci (in vitro). Exhibits antimicrobial activity against methicillin-resistant S.aureus, P.mirabilis, and C.albicans in low-salt media, but not in media containing 100 mM NaCl (in vitro). Forms chiral supramolecular assemblies with quinolone signal (PQS) molecules of P.aeruginosa, which may lead to interference of bacterial quorum signaling and perturbance of bacterial biofilm formation. May form supramolecular fiber-like assemblies on bacterial membranes. Induces cytokine and chemokine producation as well as TNF/TNFA and CSF2/GMCSF production in normal human keratinocytes. Exhibits hemolytic activity against red blood cells. Exhibits antimicrobial activity against E.coli and B.megaterium (in vitro). This is Cathelicidin antimicrobial peptide from Nomascus gabriellae (Red-cheeked gibbon).